The following is a 751-amino-acid chain: MELDAVGKAIVQYHLVPLVHQANLGLEVTMHRVDAHGHLATTAHPQAFGSAQQNHQLRPGFSASALKFTTPVRRDIPALMAYLKGLNTAARRSLDADERLWPLSSTPVLPDDLTNVPLADVDQVSYQRRRDLARKYELQRLMTTGSHVNMSLNEALFTRLYTETFHQQYHSYVDFRNAIYLKVAQGLVRMNWLIQYLFGASPRLAVTDTTSRPQRSSVQHPDGRYSQVTGDYTSIDRYVAKLTAAVRQQQLLSVNDFDGPVRLRSNGQLAMMARQGVYYLEYRGLDLDPTSPVGVDANAVAFVRLLASYFVMMPALPAKMVSQVNAQADQLTRQVLGENPTTASAQAVPAVQVLDALADFVKTYGLPNEDAVLLKQLKSWVTDPKKTLSAQIAMQADPLAWALERAARYQESSNERPFELAGFTALDLSSQQLAQQALTRGVQVDVVDPHANILRLTKLGRSQLVVNGSGTDLNPQALTTVLTHKAAAKQILAEHGVPVPASQTYHTANQLIADYDRYVQAGGIVLKAADESHKVIVFRIMPERGLFEQVVRQLFEQTSAVMAEEVVVASSYRFLVIDSRVQAIVERIPANIVGDGRSTVKTLLDRKNGRALRGTAFKWPQSALQLGTIERYRLDSYHLTLDSVVSRGTQILLREDATFGNGADVLDATADMHQSYVQAVEKLVADLHLAVAGVDVMIPNLYAELVPEHPEMAVYLGIHAAPYLYPHLFPMFGTAQPVAGQLLDALFKNED.

A glutamate--cysteine ligase region spans residues Met1–Leu336.

The protein in the N-terminal section; belongs to the glutamate--cysteine ligase type 1 family. Type 2 subfamily. Monomer.

It carries out the reaction L-cysteine + L-glutamate + ATP = gamma-L-glutamyl-L-cysteine + ADP + phosphate + H(+). The catalysed reaction is gamma-L-glutamyl-L-cysteine + glycine + ATP = glutathione + ADP + phosphate + H(+). It participates in sulfur metabolism; glutathione biosynthesis; glutathione from L-cysteine and L-glutamate: step 1/2. The protein operates within sulfur metabolism; glutathione biosynthesis; glutathione from L-cysteine and L-glutamate: step 2/2. Its function is as follows. Synthesizes glutathione from L-glutamate and L-cysteine via gamma-L-glutamyl-L-cysteine. This Lactiplantibacillus plantarum (strain ATCC BAA-793 / NCIMB 8826 / WCFS1) (Lactobacillus plantarum) protein is Glutathione biosynthesis bifunctional protein GshAB (gshAB).